The sequence spans 287 residues: ATP synthase gamma chain (287 aa).

This sequence belongs to the ATPase gamma chain family. As to quaternary structure, F-type ATPases have 2 components, CF(1) - the catalytic core - and CF(0) - the membrane proton channel. CF(1) has five subunits: alpha(3), beta(3), gamma(1), delta(1), epsilon(1). CF(0) has three main subunits: a, b and c.

The protein localises to the cell inner membrane. Its function is as follows. Produces ATP from ADP in the presence of a proton gradient across the membrane. The gamma chain is believed to be important in regulating ATPase activity and the flow of protons through the CF(0) complex. The polypeptide is ATP synthase gamma chain (Geobacter sp. (strain M21)).